The following is a 264-amino-acid chain: Chymotrypsin-like protease CTRL-1 (264 aa).

The first 18 residues, 1–18 (MLLLSLTLSLVLLGSSWG), serve as a signal peptide directing secretion. A propeptide spans 19 to 33 (CGIPAIKPALSFSQR) (activation peptide). 5 disulfides stabilise this stretch: Cys-19–Cys-141, Cys-60–Cys-76, Cys-155–Cys-220, Cys-187–Cys-201, and Cys-210–Cys-239. The region spanning 34–262 (IVNGENAVLG…FSTWINQVIA (229 aa)) is the Peptidase S1 domain. Catalysis depends on His-75, which acts as the Charge relay system. Asn-114 carries an N-linked (GlcNAc...) asparagine glycan. Asp-121 serves as the catalytic Charge relay system. The Charge relay system role is filled by Ser-214.

It belongs to the peptidase S1 family.

The sequence is that of Chymotrypsin-like protease CTRL-1 (CTRL) from Homo sapiens (Human).